We begin with the raw amino-acid sequence, 62 residues long: Photosystem II reaction center protein Z (62 aa).

2 helical membrane passes run 8–28 (SVFALITISFLLVIGVPVVLA) and 41–61 (FSGASLWIGLVFLVGILNSLI).

It belongs to the PsbZ family. PSII is composed of 1 copy each of membrane proteins PsbA, PsbB, PsbC, PsbD, PsbE, PsbF, PsbH, PsbI, PsbJ, PsbK, PsbL, PsbM, PsbT, PsbY, PsbZ, Psb30/Ycf12, at least 3 peripheral proteins of the oxygen-evolving complex and a large number of cofactors. It forms dimeric complexes.

It localises to the plastid. The protein resides in the chloroplast thylakoid membrane. In terms of biological role, may control the interaction of photosystem II (PSII) cores with the light-harvesting antenna, regulates electron flow through the 2 photosystem reaction centers. PSII is a light-driven water plastoquinone oxidoreductase, using light energy to abstract electrons from H(2)O, generating a proton gradient subsequently used for ATP formation. The sequence is that of Photosystem II reaction center protein Z from Psilotum nudum (Whisk fern).